We begin with the raw amino-acid sequence, 414 residues long: Probable sugar phosphate/phosphate translocator At1g06470 (414 aa).

9 helical membrane passes run 72–92, 101–121, 172–192, 197–217, 224–244, 259–279, 303–323, 328–348, and 354–374; these read VLKTLFFILVWYTFSTFLTLY, LGKFPAPLLMNTIHFSIQAVL, TFATMCKSAAPIFLLLFAFAF, PSLKLFGIISVISAGVLLTVA, FWGFVFVMLAAVMSGFRWCMT, FIFMSCVAPVMAIATGLLSLL, FLMLFGGALAFCMVLTEYVLV, AVTVTIAGVVKEAVTIVVAVF, and FTWLKGVGLMIIMVGVSLFNW. The EamA domain occupies 106–216; it reads APLLMNTIHF…VISAGVLLTV (111 aa).

The protein belongs to the TPT transporter family. TPT (TC 2.A.7.9) subfamily.

It localises to the membrane. This Arabidopsis thaliana (Mouse-ear cress) protein is Probable sugar phosphate/phosphate translocator At1g06470.